Here is a 275-residue protein sequence, read N- to C-terminus: 4-hydroxy-tetrahydrodipicolinate reductase (275 aa).

NAD(+) is bound by residues 13-18 and 108-110; these read GAGGKM and GTT. H164 (proton donor/acceptor) is an active-site residue. A (S)-2,3,4,5-tetrahydrodipicolinate-binding site is contributed by H165. K168 (proton donor) is an active-site residue. 174–175 contributes to the (S)-2,3,4,5-tetrahydrodipicolinate binding site; sequence GT.

The protein belongs to the DapB family.

It localises to the cytoplasm. The enzyme catalyses (S)-2,3,4,5-tetrahydrodipicolinate + NAD(+) + H2O = (2S,4S)-4-hydroxy-2,3,4,5-tetrahydrodipicolinate + NADH + H(+). The catalysed reaction is (S)-2,3,4,5-tetrahydrodipicolinate + NADP(+) + H2O = (2S,4S)-4-hydroxy-2,3,4,5-tetrahydrodipicolinate + NADPH + H(+). It participates in amino-acid biosynthesis; L-lysine biosynthesis via DAP pathway; (S)-tetrahydrodipicolinate from L-aspartate: step 4/4. Catalyzes the conversion of 4-hydroxy-tetrahydrodipicolinate (HTPA) to tetrahydrodipicolinate. In Picosynechococcus sp. (strain ATCC 27264 / PCC 7002 / PR-6) (Agmenellum quadruplicatum), this protein is 4-hydroxy-tetrahydrodipicolinate reductase.